Reading from the N-terminus, the 720-residue chain is MSEGAAAASPPGAASAAAASAEEGTAAAAAAAAAGGGPDGGGEGAAEPPRELRCSDCIVWNRQQTWLCVVPLFIGFIGLGLSLMLLKWIVVGSVKEYVPTDLVDSKGMGQDPFFLSKPSSFPKAMETTTTTTSTTSPATPSAGGAASSRTPNRISTRLTTITRAPTRFPGHRVPIRASPRSTTARNTAAPATVPSTTAPFFSSSTLGSRPPVPGTPSTQAMPSWPTAAYATSSYLHDSTPSWTLSPFQDAASSSSSSSSSATTTTPETSTSPKFHTTTYSTERSEHFKPCRDKDLAYCLNDGECFVIETLTGSHKHCRCKEGYQGVRCDQFLPKTDSILSDPTDHLGIEFMESEEVYQRQVLSISCIIFGIVIVGMFCAAFYFKSKKQAKQIQEQLKVPQNGKSYSLKASSTMAKSENLVKSHVQLQNYSKVERHPVTALEKMMESSFVGPQSFPEVPSPDRGSQSVKHHRSLSSCCSPGQRSGMLHRNAFRRTPPSPRSRLGGIVGPAYQQLEESRIPDQDTIPCQGIEVRKTISHLPIQLWCVERPLDLKYSSSGLKTQRNTSINMQLPSRETNPYFNSLEQKDLVGYSSTRASSVPIIPSVGLEETCLQMPGISEVKSIKWCKNSYSADVVNVSIPVSDCLIAEQQEVKILLETVQEQIRILTDARRSEDYELASVETEDSASENTAFLPLSPTAKSEREAQFVLRNEIQRDSALTK.

The Extracellular segment spans residues 1-360; the sequence is MSEGAAAASP…MESEEVYQRQ (360 aa). Disordered regions lie at residues 28–48, 119–223, and 246–280; these read AAAAAAAGGGPDGGGEGAAEP, SSFP…AMPS, and PFQDAASSSSSSSSSATTTTPETSTSPKFHTTTYS. The span at 34–44 shows a compositional bias: gly residues; the sequence is AGGGPDGGGEG. The span at 127 to 148 shows a compositional bias: low complexity; that stretch reads TTTTTTSTTSPATPSAGGAASS. Positions 149–163 are enriched in polar residues; sequence RTPNRISTRLTTITR. Low complexity-rich tracts occupy residues 187–205 and 250–271; these read TAAPATVPSTTAPFFSSST and AASSSSSSSSSATTTTPETSTS. The EGF-like domain maps to 286–329; the sequence is HFKPCRDKDLAYCLNDGECFVIETLTGSHKHCRCKEGYQGVRCD. Disulfide bonds link Cys290-Cys304, Cys298-Cys317, and Cys319-Cys328. The helical transmembrane segment at 361-381 threads the bilayer; it reads VLSISCIIFGIVIVGMFCAAF. Residues 382–720 lie on the Cytoplasmic side of the membrane; sequence YFKSKKQAKQ…EIQRDSALTK (339 aa). Residues 451–481 form a disordered region; it reads PQSFPEVPSPDRGSQSVKHHRSLSSCCSPGQ.

This sequence belongs to the neuregulin family. In terms of assembly, interacts with ERBB4. Post-translationally, proteolytic cleavage close to the plasma membrane on the external face leads to the release of the soluble growth factor form. In terms of processing, extensive glycosylation precedes the proteolytic cleavage. Isoform 3 is glycosylated. In terms of tissue distribution, highly expressed in most regions of the brain with the exception of corpus callosum. Expressed at lower level in testis. Not detected in heart, placenta, lung, liver, skeletal muscle, kidney, pancreas, spleen, thymus, prostate, ovary, small intestine, colon and peripheral blood leukocytes.

Its subcellular location is the cell membrane. It localises to the secreted. Its function is as follows. Direct ligand for the ERBB4 tyrosine kinase receptor. Binding results in ligand-stimulated tyrosine phosphorylation and activation of the receptor. Does not bind to the EGF receptor, ERBB2 or ERBB3 receptors. May be a survival factor for oligodendrocytes. This Homo sapiens (Human) protein is Pro-neuregulin-3, membrane-bound isoform (NRG3).